The following is a 414-amino-acid chain: O-methyltransferase sirM (414 aa).

S-adenosyl-L-methionine is bound at residue aspartate 270. The active-site Proton acceptor is the histidine 321.

This sequence belongs to the class I-like SAM-binding methyltransferase superfamily. Cation-independent O-methyltransferase family. COMT subfamily.

It participates in mycotoxin biosynthesis. In terms of biological role, O-methyltransferase; part of the gene cluster that mediates the biosynthesis of sirodesmin PL, an epipolythiodioxopiperazine (ETP) characterized by a disulfide bridged cyclic dipeptide and that acts as a phytotoxin which is involved in the blackleg didease of canola. SirD catalyzes the O-prenylation of L-tyrosine (L-Tyr) in the presence of dimethylallyl diphosphate (DMAPP) to yield 4-O-dimethylallyl-L-Tyr, and therefore represents probably the first pathway-specific enzyme in the biosynthesis of sirodesmin PL. 4-O-dimethylallyl-L-Tyr, then undergoes condensation with L-Ser in a reaction catalyzed by the non-ribosomal peptide synthase sirP to form the diketopiperazine (DKP) backbone. Further bishydroxylation of the DKP performed by the cytochrome P450 monooxygenase sirC leads to the production of the intermediate phomamide. This step is essential to form the reactive thiol group required for toxicity of sirodesmin PL. The next steps of sirodesmin biosynthesis are not well understood yet, but some predictions could be made from intermediate compounds identification. Phomamide is converted into phomalizarine via oxidation, probably by sirT. Further oxidation, methylation (by sirM or sirN) and reduction steps convert phomalizarine to deacetyl sirodesmin. Finally, acetyltransferase sirH probably acetylates deacetyl sirodesmin to produce sirodesmin PL. The chain is O-methyltransferase sirM from Leptosphaeria maculans (Blackleg fungus).